A 1107-amino-acid chain; its full sequence is MVFDARLGYDPDEWEECPEPEHFLVFSGFTRYMLTFAAIAFVYYFFKLLDDKNKKESGEKEEPQTSVESVLAKAGDKLHDVKEQVQQHIPESAEELMREADQYLKEQAHSVQNNVHQFAEQAANKFPSLEVDLNLGHPIDATREKFDTVLSSVNNHLHETKNMDLSPTSRDSTQFEQIPSIAPEESAFGHDFEHVPPHLKTAAEQYYAQQHQPPPVPQHKIVQPVPISPTDQQLLHEFDIYDAPAHQRMNQISEQLGQLGQKTPAQLQQLQHAQLAHQQLQQQGVFQPIQQPSPLQIQTHPQQPYFDFSQLSPASQARYNQQQFVDISQLSPGAGALIAEQQASGAFQPVTKKLGREKRLSEQDERALQDWEKEKALLEADRLKKLLDHEVGGDSTDLDSSQKAYDHFAPASHISYESHSGAAQIQPMTPTAPKRADVPAPQVTSITNVRDSQLTDYDISDFHAHDEPHYHTVLTPQQLQQNQQQHQQPSAIDRRRTTADSDDYVKVSEPIYDYPPKGHEAPVAEPKRISPTEAAQLQELYQEYDLGLDLPGVAPIQGVAKPPVQQRTPLQIQQQVVQNVQNQPNMMARQNSVPESPRTVINVPISRKTDVPIQVQQQQNQFSYNVPIQVKDDPRNLATADLFVQDAQEYVAHQQNQQDKGSFVMEEEMLSLHEPETGSNKKKLTPKNPSFEATSRQVRTNDVFERIEHDEHDDMTYAPEIQSVEIPPDQMSETSENMIDYFDKVAAESEQQIQHLQEQQNTLKKQQIETSIPDSSLLKPVGRAPQILPAFGNRISSNSSLGSAGRSGSGVSSSDVYPYRHLRKQSSLLSVLGVTSMQEMLLAITSLDSLSEAMRKAGLETTNLIFGIDYTASNKYQGEESFGGRSLHTIHPHVTNPYQQVISILGRTLAPFAGQGRLGVYGFGDAKTGDWSVFNLKGEGGDCRSLDEVLNVYNTVTPTVALSGPTNFAPLIYQAMEICQKSRDYHILVIIADGQVTNERATRRAIVQACQHPLSIIVVGVGDGPWDMMRIFDESLPKRPWDNFHFVEFHEIVKKSTNMEDGDVKLAVQSLLEIPDQYRCICELGLLDRSIPPRGSEIRREMMHNPL.

The Extracellular portion of the chain corresponds to M1–H22. The chain crosses the membrane as a helical span at residues F23–F45. At F46–L1107 the chain is on the cytoplasmic side. Residues V67–N124 are a coiled coil. Residues Q478–Q488 are compositionally biased toward low complexity. Disordered stretches follow at residues Q478–S501 and H673–V698. Positions I492–S501 are enriched in basic and acidic residues. Polar residues predominate over residues K687–V698. A VWFA domain is found at N863–D1023.

The protein belongs to the copine family. As to quaternary structure, may interact (via VWFA domain) with unc-89 (via Ig-like C2-type 1-3) and unc-96 (via C-terminus); cpna-1 binding sites for unc-89 and unc-96 are different. May interact with pat-6. May interact with lim-9 (via LIM domains) and with scpl-1 (via FCP1 homology domain). In terms of tissue distribution, expressed in body wall muscles (at protein level).

It is found in the basal cell membrane. The protein localises to the cytoplasm. Its subcellular location is the myofibril. It localises to the sarcomere. The protein resides in the m line. Involved in the assembly of dense bodies and M lines during body wall muscle development. Acts by recruiting downstream of integrin-associated protein pat-6/actopaxin several dense bodies and M line components including unc-89, lim-9, scpl-1 and unc-96 to integrin-mediated attachment sites. The protein is Copine family protein 1 of Caenorhabditis elegans.